Reading from the N-terminus, the 212-residue chain is Thymidylate kinase (212 aa).

10-17 (GLDGAGKT) contributes to the ATP binding site.

It belongs to the thymidylate kinase family.

The catalysed reaction is dTMP + ATP = dTDP + ADP. In terms of biological role, phosphorylation of dTMP to form dTDP in both de novo and salvage pathways of dTTP synthesis. The protein is Thymidylate kinase of Blochmanniella pennsylvanica (strain BPEN).